Reading from the N-terminus, the 282-residue chain is MKLIESIEEMQSTAINARQAGKTVALVPTMGYLHAGHASLMDEGRKRADILVASIFVNPTQFGAGEDFNTYPRDLEKDKLIAKAAGVDYIFAPKASDMYPTGYQTYVNVEKLTRPLCGASRPGHFRGVTTVVAKLFNIVMPHLALFGKKDFQQLTVIRRMAADLNMTVQIVGMPIVRESDGLAMSSRNAYLSQAERQSALCLSLALQSVRGAFRSGERSVEALRKLALDIINAEAFAVIDYVEFYHEATLTEVEQADDRTLVALAVKIGKTRLIDNCVLGED.

Residue 30–37 (MGYLHAGH) coordinates ATP. His-37 functions as the Proton donor in the catalytic mechanism. Gln-61 contributes to the (R)-pantoate binding site. Position 61 (Gln-61) interacts with beta-alanine. 147-150 (GKKD) is a binding site for ATP. Residue Gln-153 participates in (R)-pantoate binding. ATP-binding positions include Val-176 and 184 to 187 (MSSR).

Belongs to the pantothenate synthetase family. Homodimer.

Its subcellular location is the cytoplasm. It carries out the reaction (R)-pantoate + beta-alanine + ATP = (R)-pantothenate + AMP + diphosphate + H(+). The protein operates within cofactor biosynthesis; (R)-pantothenate biosynthesis; (R)-pantothenate from (R)-pantoate and beta-alanine: step 1/1. Catalyzes the condensation of pantoate with beta-alanine in an ATP-dependent reaction via a pantoyl-adenylate intermediate. This is Pantothenate synthetase from Geotalea uraniireducens (strain Rf4) (Geobacter uraniireducens).